The sequence spans 397 residues: Penicillopepsin-1 (397 aa).

A signal peptide spans 1–20 (MVVFSQVTVALTCFSAIASA). Residues 21–71 (AAVRQEPPQGFTVNQVQKAVPGTRTVNLPGLYANALVKYGATVPATVHAAA) constitute a propeptide, activation peptide. In terms of domain architecture, Peptidase A1 spans 87-394 (YLTPVTIGSS…DSEGPRLGFA (308 aa)). Residues aspartate 103 and aspartate 285 contribute to the active site. The N-linked (GlcNAc...) asparagine glycan is linked to asparagine 311. Cysteine 322 and cysteine 357 are disulfide-bonded.

This sequence belongs to the peptidase A1 family. As to quaternary structure, monomer.

The protein localises to the secreted. It carries out the reaction Hydrolysis of proteins with broad specificity similar to that of pepsin A, preferring hydrophobic residues at P1 and P1', but also cleaving 20-Gly-|-Glu-21 in the B chain of insulin. Clots milk, and activates trypsinogen.. In terms of biological role, secreted aspartic endopeptidase that allows assimilation of proteinaceous substrates. The scissile peptide bond is attacked by a nucleophilic water molecule activated by two aspartic residues in the active site. Shows a broad primary substrate specificity. Favors hydrophobic residues at the P1 and P1' positions, but can also activate trypsinogen and hydrolyze the B chain of insulin between positions 'Gly-20' and 'Glu-21'. The sequence is that of Penicillopepsin-1 from Penicillium roqueforti.